We begin with the raw amino-acid sequence, 257 residues long: DNA repair protein RecO (257 aa).

It belongs to the RecO family.

Its function is as follows. Involved in DNA repair and RecF pathway recombination. This Streptococcus thermophilus (strain CNRZ 1066) protein is DNA repair protein RecO.